A 243-amino-acid chain; its full sequence is Exosome complex component Rrp41 (243 aa).

It belongs to the RNase PH family. Rrp41 subfamily. Component of the archaeal exosome complex. Forms a hexameric ring-like arrangement composed of 3 Rrp41-Rrp42 heterodimers. The hexameric ring associates with a trimer of Rrp4 and/or Csl4 subunits.

It localises to the cytoplasm. Catalytic component of the exosome, which is a complex involved in RNA degradation. Has 3'-&gt;5' exoribonuclease activity. Can also synthesize heteromeric RNA-tails. The protein is Exosome complex component Rrp41 of Cenarchaeum symbiosum (strain A).